Consider the following 154-residue polypeptide: Histone H2B type F-M (154 aa).

A compositionally biased stretch (low complexity) spans 1 to 18 (MAAASAMAEASSETTSEE). The segment at 1–61 (MAAASAMAEA…RGDSFGDSFT (61 aa)) is disordered. The segment covering 34–50 (QKQKRRGCRGSRRRHAN) has biased composition (basic residues).

It belongs to the histone H2B family. The nucleosome is a histone octamer containing two molecules each of H2A, H2B, H3 and H4 assembled in one H3-H4 heterotetramer and two H2A-H2B heterodimers. The octamer wraps approximately 147 bp of DNA.

Its subcellular location is the nucleus. The protein resides in the chromosome. Core component of nucleosome. Nucleosomes wrap and compact DNA into chromatin, limiting DNA accessibility to the cellular machineries which require DNA as a template. Histones thereby play a central role in transcription regulation, DNA repair, DNA replication and chromosomal stability. DNA accessibility is regulated via a complex set of post-translational modifications of histones, also called histone code, and nucleosome remodeling. The protein is Histone H2B type F-M of Homo sapiens (Human).